We begin with the raw amino-acid sequence, 287 residues long: 3-methyl-2-oxobutanoate hydroxymethyltransferase (287 aa).

Residues Asp-67 and Asp-106 each coordinate Mg(2+). Residues 67-68, Asp-106, and Lys-136 each bind 3-methyl-2-oxobutanoate; that span reads DS. Residue Glu-138 participates in Mg(2+) binding. Glu-204 serves as the catalytic Proton acceptor.

Belongs to the PanB family. Homodecamer; pentamer of dimers. Mg(2+) is required as a cofactor.

It localises to the cytoplasm. It carries out the reaction 3-methyl-2-oxobutanoate + (6R)-5,10-methylene-5,6,7,8-tetrahydrofolate + H2O = 2-dehydropantoate + (6S)-5,6,7,8-tetrahydrofolate. Its pathway is cofactor biosynthesis; (R)-pantothenate biosynthesis; (R)-pantoate from 3-methyl-2-oxobutanoate: step 1/2. Catalyzes the reversible reaction in which hydroxymethyl group from 5,10-methylenetetrahydrofolate is transferred onto alpha-ketoisovalerate to form ketopantoate. The sequence is that of 3-methyl-2-oxobutanoate hydroxymethyltransferase from Streptomyces avermitilis (strain ATCC 31267 / DSM 46492 / JCM 5070 / NBRC 14893 / NCIMB 12804 / NRRL 8165 / MA-4680).